Here is a 707-residue protein sequence, read N- to C-terminus: Nucleolin 2 (707 aa).

Positions 1 to 446 are disordered; it reads MGKSSKKSAV…TPASNQNQAT (446 aa). 2 stretches are compositionally biased toward basic and acidic residues: residues 30–40 and 47–60; these read RNAEDEIEKAV and TVRE…EEAK. 3 stretches are compositionally biased toward acidic residues: residues 75–85, 108–120, and 144–153; these read SSEEDSSESEE, SSDD…SSDD, and DSSDESLSDD. The span at 158–170 shows a compositional bias: low complexity; that stretch reads KPAAPLKKPVALA. Composition is skewed to acidic residues over residues 219–232, 248–263, and 271–287; these read DSSD…SDED, SESS…DDEA, and ESSD…SDSD. Positions 300-311 are enriched in basic and acidic residues; the sequence is LTKDTKKGQSKD. The span at 312 to 326 shows a compositional bias: acidic residues; the sequence is ESEDSSDESSEESGD. A compositionally biased stretch (low complexity) spans 336–347; that stretch reads STTSGTTKPSPK. The span at 355-370 shows a compositional bias: acidic residues; the sequence is SDDESDEDDSSDESSD. A compositionally biased stretch (low complexity) spans 376-394; the sequence is KQTQAKKQAPVAQESSSSD. Residues 395-406 are compositionally biased toward acidic residues; it reads ESSEEDSDMESD. Over residues 407 to 417 the composition is skewed to basic and acidic residues; the sequence is EPAKTPQKKET. Positions 420-429 are enriched in polar residues; that stretch reads SVGSNKSATK. The region spanning 449–525 is the RRM 1 domain; it reads KTLFVGNLPY…RPVRLDLARE (77 aa). Disordered stretches follow at residues 527–546 and 629–707; these read GAYT…PAQS and RPRP…GDDD. Residues 549-630 enclose the RRM 2 domain; sequence NTIFIKGFDT…YSLYVDEARP (82 aa). Basic and acidic residues predominate over residues 657–681; that stretch reads GRGDGSRGRGDRGRGRGFGRGDRGH.

The protein resides in the nucleus. It is found in the nucleolus. Involved in pre-rRNA processing and ribosome assembly. This Oryza sativa subsp. japonica (Rice) protein is Nucleolin 2.